The sequence spans 220 residues: 7-cyano-7-deazaguanine synthase (220 aa).

ATP is bound at residue 10 to 20; that stretch reads FSGGQDSTTCL. Zn(2+) is bound by residues cysteine 186, cysteine 195, cysteine 198, and cysteine 201.

Belongs to the QueC family. In terms of assembly, homodimer. Zn(2+) is required as a cofactor.

It carries out the reaction 7-carboxy-7-deazaguanine + NH4(+) + ATP = 7-cyano-7-deazaguanine + ADP + phosphate + H2O + H(+). The protein operates within purine metabolism; 7-cyano-7-deazaguanine biosynthesis. In terms of biological role, catalyzes the ATP-dependent conversion of 7-carboxy-7-deazaguanine (CDG) to 7-cyano-7-deazaguanine (preQ(0)). This is 7-cyano-7-deazaguanine synthase from Bacillus cereus (strain B4264).